The following is a 2207-amino-acid chain: Mediator of RNA polymerase II transcription subunit 13-like (2207 aa).

The span at 337 to 355 (VQSAASHLGSQDGGMSTMH) shows a compositional bias: polar residues. Disordered stretches follow at residues 337–368 (VQSAASHLGSQDGGMSTMHSPKRSRKTPPKLH), 384–403 (AQSKRSQMSTPTREEEAAHS), 431–479 (VGPS…KRPL), and 519–574 (KYDK…VPVN). Residues 356 to 368 (SPKRSRKTPPKLH) are compositionally biased toward basic residues. The segment covering 384–394 (AQSKRSQMSTP) has biased composition (polar residues). A compositionally biased stretch (low complexity) spans 442–453 (PGFSAGLPSSSS). Residues 463-475 (KTTERQEKGDKLQ) show a composition bias toward basic and acidic residues. Polar residues predominate over residues 528-539 (SRNTSKQMNLNP). Residues 546–555 (PISPLPPTLS) show a composition bias toward pro residues. Phosphoserine occurs at positions 548 and 555. Positions 664 to 668 (LQRLL) match the LXXLL motif 1 motif. Basic and acidic residues predominate over residues 731–747 (GTEKDSLKKNKSEDGFG). A disordered region spans residues 731 to 767 (GTEKDSLKKNKSEDGFGTKDVTTPGHSTPVPDGKNAM). Phosphoserine occurs at positions 812 and 821. Residues 816 to 847 (ELGAVSPALRSSKMPTVGTEERPPGKDGRAAG) form a disordered region. Residues 834–844 (TEERPPGKDGR) show a composition bias toward basic and acidic residues. Position 918 is a phosphoserine (serine 918). The tract at residues 1004–1091 (DPDYVNTPQM…STTRPLNSVE (88 aa)) is disordered. Residues 1009–1019 (NTPQMNTPVTL) are compositionally biased toward polar residues. Low complexity predominate over residues 1020–1031 (NSAAPASNSGAG). The span at 1072-1087 (TDQGSPASTPSTTRPL) shows a compositional bias: polar residues. An LXXLL motif 2 motif is present at residues 1224 to 1228 (LLLLL). The leucine-zipper stretch occupies residues 1379–1400 (LPIPTLLVGYDKEFLTISPFSL). Disordered regions lie at residues 1523 to 1652 (LMPP…SVTE) and 2042 to 2077 (GNLHSSPNSSPVPSPGSPSGIGVGSHFQHSRSQGER). Positions 1541 to 1593 (PGNAGSLPSNSGSGAPPAGSAFNPTSSSSANPTTSSSSASSGPPGSSAASAPG) are enriched in low complexity. Polar residues-rich tracts occupy residues 1612–1624 (QNPSAGGSSTDRT) and 1635–1649 (PGQSCTQSSQDGQDS). Serine 2080 is subject to Phosphoserine.

Belongs to the Mediator complex subunit 13 family. In terms of assembly, component of the Mediator complex, which is composed of MED1, MED4, MED6, MED7, MED8, MED9, MED10, MED11, MED12, MED13, MED13L, MED14, MED15, MED16, MED17, MED18, MED19, MED20, MED21, MED22, MED23, MED24, MED25, MED26, MED27, MED29, MED30, MED31, CCNC, CDK8 and CDC2L6/CDK11. The MED12, MED13, CCNC and CDK8 subunits form a distinct module termed the CDK8 module. Mediator containing the CDK8 module is less active than Mediator lacking this module in supporting transcriptional activation. Individual preparations of the Mediator complex lacking one or more distinct subunits have been variously termed ARC, CRSP, DRIP, PC2, SMCC and TRAP. As to expression, highly expressed in heart and weakly expressed in brain, spleen, lung, liver, kidney and testis.

Its subcellular location is the nucleus. Functionally, component of the Mediator complex, a coactivator involved in the regulated transcription of nearly all RNA polymerase II-dependent genes. Mediator functions as a bridge to convey information from gene-specific regulatory proteins to the basal RNA polymerase II transcription machinery. Mediator is recruited to promoters by direct interactions with regulatory proteins and serves as a scaffold for the assembly of a functional preinitiation complex with RNA polymerase II and the general transcription factors. This subunit may specifically regulate transcription of targets of the Wnt signaling pathway and SHH signaling pathway. The chain is Mediator of RNA polymerase II transcription subunit 13-like (Med13l) from Mus musculus (Mouse).